Here is a 255-residue protein sequence, read N- to C-terminus: Enolase-phosphatase E1 (255 aa).

The Mg(2+) site is built by Asp22 and Glu24. Substrate-binding positions include 136–137 (SS) and Lys173. Asp199 contributes to the Mg(2+) binding site.

Belongs to the HAD-like hydrolase superfamily. MasA/MtnC family. In terms of assembly, monomer. It depends on Mg(2+) as a cofactor.

The protein resides in the cytoplasm. It is found in the nucleus. The catalysed reaction is 5-methylsulfanyl-2,3-dioxopentyl phosphate + H2O = 1,2-dihydroxy-5-(methylsulfanyl)pent-1-en-3-one + phosphate. It functions in the pathway amino-acid biosynthesis; L-methionine biosynthesis via salvage pathway; L-methionine from S-methyl-5-thio-alpha-D-ribose 1-phosphate: step 3/6. It participates in amino-acid biosynthesis; L-methionine biosynthesis via salvage pathway; L-methionine from S-methyl-5-thio-alpha-D-ribose 1-phosphate: step 4/6. Functionally, bifunctional enzyme that catalyzes the enolization of 2,3-diketo-5-methylthiopentyl-1-phosphate (DK-MTP-1-P) into the intermediate 2-hydroxy-3-keto-5-methylthiopentenyl-1-phosphate (HK-MTPenyl-1-P), which is then dephosphorylated to form the acireductone 1,2-dihydroxy-3-keto-5-methylthiopentene (DHK-MTPene). This is Enolase-phosphatase E1 from Verticillium alfalfae (strain VaMs.102 / ATCC MYA-4576 / FGSC 10136) (Verticillium wilt of alfalfa).